We begin with the raw amino-acid sequence, 333 residues long: Secreted mono- and diacylglycerol lipase 1 (333 aa).

A signal peptide spans 1-16; the sequence is MMLILSILSIIAFAAA. Disulfide bonds link C56–C268 and C276–C298. Residue S176 is the Nucleophile of the active site. Residues D230 and H288 contribute to the active site.

It belongs to the AB hydrolase superfamily. Lipase family. Class 3 subfamily.

The protein resides in the secreted. It catalyses the reaction a monoacylglycerol + H2O = glycerol + a fatty acid + H(+). The catalysed reaction is a diacylglycerol + H2O = a monoacylglycerol + a fatty acid + H(+). In terms of biological role, secreted mono- and diacylglycerol lipase that allows the use of hydrolyzed lipids as carbon source and might play a role in pathogenicity. Shows lipolytic activity towards olive oil and p-nitrophenylpalmitate. This Fusarium solani (Filamentous fungus) protein is Secreted mono- and diacylglycerol lipase 1.